The primary structure comprises 162 residues: Non-specific lipid transfer protein GPI-anchored 27 (162 aa).

Positions methionine 1 to alanine 29 are cleaved as a signal peptide. Cystine bridges form between cysteine 39–cysteine 78, cysteine 50–cysteine 62, cysteine 63–cysteine 102, and cysteine 76–cysteine 110. A glycan (N-linked (GlcNAc...) asparagine) is linked at asparagine 68. Asparagine 124 and asparagine 135 each carry an N-linked (GlcNAc...) asparagine glycan. The GPI-anchor amidated serine moiety is linked to residue serine 137. The propeptide at valine 138–phenylalanine 162 is removed in mature form.

This sequence belongs to the plant LTP family.

It is found in the cell membrane. Its function is as follows. Probable lipid transfer protein. In Arabidopsis thaliana (Mouse-ear cress), this protein is Non-specific lipid transfer protein GPI-anchored 27.